The primary structure comprises 217 residues: Probable GTP-binding protein EngB (217 aa).

Positions 29–213 constitute an EngB-type G domain; the sequence is GPLEVAFAGR…RQAIGETVGV (185 aa). GTP-binding positions include 37–44, 64–68, 91–94, 158–161, and 192–194; these read GRSNVGKS, GRTQE, DMPG, TKTD, and TSS. Mg(2+) is bound by residues serine 44 and threonine 66.

This sequence belongs to the TRAFAC class TrmE-Era-EngA-EngB-Septin-like GTPase superfamily. EngB GTPase family. It depends on Mg(2+) as a cofactor.

Functionally, necessary for normal cell division and for the maintenance of normal septation. The protein is Probable GTP-binding protein EngB of Rhizobium leguminosarum bv. trifolii (strain WSM2304).